Here is a 94-residue protein sequence, read N- to C-terminus: Aspartyl/glutamyl-tRNA(Asn/Gln) amidotransferase subunit C (94 aa).

A disordered region spans residues 72-94 (PREKALQGAPEVSEGQFKVPRVV).

This sequence belongs to the GatC family. Heterotrimer of A, B and C subunits.

It carries out the reaction L-glutamyl-tRNA(Gln) + L-glutamine + ATP + H2O = L-glutaminyl-tRNA(Gln) + L-glutamate + ADP + phosphate + H(+). The catalysed reaction is L-aspartyl-tRNA(Asn) + L-glutamine + ATP + H2O = L-asparaginyl-tRNA(Asn) + L-glutamate + ADP + phosphate + 2 H(+). Functionally, allows the formation of correctly charged Asn-tRNA(Asn) or Gln-tRNA(Gln) through the transamidation of misacylated Asp-tRNA(Asn) or Glu-tRNA(Gln) in organisms which lack either or both of asparaginyl-tRNA or glutaminyl-tRNA synthetases. The reaction takes place in the presence of glutamine and ATP through an activated phospho-Asp-tRNA(Asn) or phospho-Glu-tRNA(Gln). This chain is Aspartyl/glutamyl-tRNA(Asn/Gln) amidotransferase subunit C, found in Moorella thermoacetica (strain ATCC 39073 / JCM 9320).